The sequence spans 563 residues: Sulfite reductase [NADPH] hemoprotein beta-component (563 aa).

[4Fe-4S] cluster contacts are provided by cysteine 427, cysteine 433, cysteine 472, and cysteine 476. A siroheme-binding site is contributed by cysteine 476.

This sequence belongs to the nitrite and sulfite reductase 4Fe-4S domain family. In terms of assembly, alpha(8)-beta(8). The alpha component is a flavoprotein, the beta component is a hemoprotein. Siroheme is required as a cofactor. [4Fe-4S] cluster serves as cofactor.

It catalyses the reaction hydrogen sulfide + 3 NADP(+) + 3 H2O = sulfite + 3 NADPH + 4 H(+). The protein operates within sulfur metabolism; hydrogen sulfide biosynthesis; hydrogen sulfide from sulfite (NADPH route): step 1/1. Component of the sulfite reductase complex that catalyzes the 6-electron reduction of sulfite to sulfide. This is one of several activities required for the biosynthesis of L-cysteine from sulfate. This is Sulfite reductase [NADPH] hemoprotein beta-component from Shewanella frigidimarina (strain NCIMB 400).